A 397-amino-acid chain; its full sequence is P-selectin glycoprotein ligand 1 (397 aa).

A signal peptide spans 1–17 (MSPSFLVLLTILGPGNS). Residues 18-41 (LQLQDPWGHETKEAPGPVHLRERR) constitute a propeptide that is removed on maturation. At 18–307 (LQLQDPWGHE…SSDLIPVKQC (290 aa)) the chain is on the extracellular side. Residue Tyr54 is modified to Sulfotyrosine. O-linked (GalNAc...) threonine glycosylation occurs at Thr58. Asn66 carries N-linked (GlcNAc...) asparagine glycosylation. The segment at 89–261 (TSAGTSERAT…TMETASTESN (173 aa)) is disordered. Residues 120–198 (STDSATQWSL…PMEAETSQPA (79 aa)) are compositionally biased toward polar residues. 10 repeat units span residues 126 to 135 (QWSLTSVETV), 136 to 145 (QPASTEVETS), 146 to 155 (QPAPMEAETS), 156 to 165 (QPAPMEAETS), 166 to 175 (QPAPMEAETS), 176 to 185 (QPAPMEADTS), 186 to 195 (QPAPMEAETS), 196 to 205 (QPAPNEAETS), 206 to 215 (KPAPTEAETS), and 216 to 225 (KPAPTEAETT). The segment at 126 to 225 (QWSLTSVETV…KPAPTEAETT (100 aa)) is 10 X 10 AA tandem repeats. Residues 236 to 261 (LFTTSAATEVPSTEPTTMETASTESN) show a composition bias toward polar residues. Residue Asn261 is glycosylated (N-linked (GlcNAc...) asparagine). A helical transmembrane segment spans residues 308–328 (LLIILILASLATIFLVCTVVL). Over 329-397 (AVRLSRKTHM…DDLTLHSFLP (69 aa)) the chain is Cytoplasmic. A disordered region spans residues 364–390 (PVTANGGLPKVQDLKTEPSGDRDGDDL). Residues 375 to 390 (QDLKTEPSGDRDGDDL) show a composition bias toward basic and acidic residues. Thr391 bears the Phosphothreonine mark. Ser394 carries the phosphoserine modification.

As to quaternary structure, homodimer; disulfide-linked. Interacts with P- and E-selectins, through their lectin/EGF domains. Interaction with P-selectin requires sialyl Lewis X glycan modification and tyrosine sulfation, probably on Tyr-54, for high affinity binding. Dimerization appears not to be required for P-selectin/SELP binding. Interacts with SNX20. Interacts with MSN and SYK; mediates SYK activation downstream of SELPLG. Interacts with HAVCR1. Post-translationally, displays complex, core-2, sialylated and fucosylated O-linked oligosaccharides, at least some of which appear to contain poly-N-acetyllactosamine with varying degrees of substitution. Mainly disialylated or neutral forms of the core-2 tetrasaccharide, Galbeta1--&gt;4GlcNAcbeta1--&gt;6(Galbeta1--&gt;3)GalNAcOH. The GlcN:GalN ratio is approximately 2:1 and the Man:Fuc ratio 3:5. Contains about 14% fucose with alpha-1,3 linkage present in two forms: One species is a disialylated, monofucosylated glycan, and the other, a monosialylated, trifucosylated glycan with a polylactosamine backbone. The fucosylated forms carry the Lewis antigen and are important for interaction with selectins and for functioning. No sulfated O-glycans. Some N-glycosylation. In terms of tissue distribution, highly expressed in blood, bone marrow, brain, adipose tissue, spleen, and thymus. Also expressed in heart, kidney, liver, muscle, ovary, and stomach.

The protein localises to the cell membrane. Functionally, a SLe(x)-type proteoglycan, which through high affinity, calcium-dependent interactions with E- and P-selectins, mediates rapid rolling of leukocytes over vascular surfaces during the initial steps in inflammation. Critical for the initial leukocyte capture. This Mus musculus (Mouse) protein is P-selectin glycoprotein ligand 1 (Selplg).